The sequence spans 53 residues: Tsetse thrombin inhibitor (53 aa).

A signal peptide spans 1–21 (MKFFTVLFFLLSIIYLIVAAP).

As to expression, expressed at high levels in salivary glands and midguts of adult tsetse flies.

The protein resides in the secreted. In terms of biological role, potent and specific inhibitor of human thrombin. It is also a potent inhibitor of thrombin-induced platelet aggregation. It is capable of antagonizing host hemostasis and facilitating blood feeding. The protein is Tsetse thrombin inhibitor (TTI) of Glossina morsitans morsitans (Savannah tsetse fly).